The chain runs to 171 residues: Phosphopantetheine adenylyltransferase (171 aa).

T9 serves as a coordination point for substrate. ATP is bound by residues 9–10 (TF) and H17. Residues K41, L73, and R87 each coordinate substrate. Residues 88 to 90 (GLR), E98, and 123 to 129 (YQFISGT) each bind ATP.

Belongs to the bacterial CoaD family. In terms of assembly, homohexamer. Mg(2+) is required as a cofactor.

Its subcellular location is the cytoplasm. The catalysed reaction is (R)-4'-phosphopantetheine + ATP + H(+) = 3'-dephospho-CoA + diphosphate. The protein operates within cofactor biosynthesis; coenzyme A biosynthesis; CoA from (R)-pantothenate: step 4/5. Functionally, reversibly transfers an adenylyl group from ATP to 4'-phosphopantetheine, yielding dephospho-CoA (dPCoA) and pyrophosphate. The chain is Phosphopantetheine adenylyltransferase from Paraburkholderia xenovorans (strain LB400).